The primary structure comprises 74 residues: Antimicrobial peptide 2 (74 aa).

A signal peptide spans 1 to 22 (MEIKYLLTVFLVLLIVSDHCQA). Lysine amide is present on lysine 40. Residues 46 to 74 (DLDGQIDRSRNFRKRDAELEELLSKLPIY) constitute a propeptide that is removed on maturation.

Expressed by the venom gland.

The protein resides in the secreted. It localises to the target cell membrane. Has antibacterial activity against the Gram-positive bacteria S.aureus (MIC=48 uM), the Gram-negative bacteria E.coli (MIC=120 uM), and the yeast C.albicans (MIC=64 uM). Causes hemolysis on horse erythrocytes. This chain is Antimicrobial peptide 2, found in Androctonus amoreuxi (African fattail scorpion).